Consider the following 200-residue polypeptide: Putative glucose-6-phosphate isomerase 2 (200 aa).

The Fe cation site is built by His92, His94, Glu101, and His140.

Belongs to the archaeal-type GPI family. Homodimer. Fe cation serves as cofactor.

The protein localises to the cytoplasm. The enzyme catalyses alpha-D-glucose 6-phosphate = beta-D-fructose 6-phosphate. It functions in the pathway carbohydrate degradation; glycolysis; D-glyceraldehyde 3-phosphate and glycerone phosphate from D-glucose: step 2/4. The chain is Putative glucose-6-phosphate isomerase 2 (pgiA2) from Rhizobium meliloti (strain 1021) (Ensifer meliloti).